We begin with the raw amino-acid sequence, 184 residues long: 3-hydroxydecanoyl-[acyl-carrier-protein] dehydratase (184 aa).

Residue histidine 77 is part of the active site.

Belongs to the thioester dehydratase family. FabA subfamily. As to quaternary structure, homodimer.

It is found in the cytoplasm. The catalysed reaction is a (3R)-hydroxyacyl-[ACP] = a (2E)-enoyl-[ACP] + H2O. The enzyme catalyses (3R)-hydroxydecanoyl-[ACP] = (2E)-decenoyl-[ACP] + H2O. It carries out the reaction (2E)-decenoyl-[ACP] = (3Z)-decenoyl-[ACP]. The protein operates within lipid metabolism; fatty acid biosynthesis. In terms of biological role, necessary for the introduction of cis unsaturation into fatty acids. Catalyzes the dehydration of (3R)-3-hydroxydecanoyl-ACP to E-(2)-decenoyl-ACP and then its isomerization to Z-(3)-decenoyl-ACP. Can catalyze the dehydratase reaction for beta-hydroxyacyl-ACPs with saturated chain lengths up to 16:0, being most active on intermediate chain length. The sequence is that of 3-hydroxydecanoyl-[acyl-carrier-protein] dehydratase from Hyphomonas neptunium (strain ATCC 15444).